The primary structure comprises 264 residues: 3'-5' ssDNA/RNA exonuclease TatD (264 aa).

Residues E92, H128, and H153 each coordinate a divalent metal cation.

This sequence belongs to the metallo-dependent hydrolases superfamily. TatD-type hydrolase family. TatD subfamily. Monomer. It depends on Mg(2+) as a cofactor.

Its subcellular location is the cytoplasm. 3'-5' exonuclease that prefers single-stranded DNA and RNA. May play a role in the H(2)O(2)-induced DNA damage repair. In Dickeya dadantii (strain 3937) (Erwinia chrysanthemi (strain 3937)), this protein is 3'-5' ssDNA/RNA exonuclease TatD.